Consider the following 194-residue polypeptide: NADPH-flavin oxidoreductase (194 aa).

Belongs to the non-flavoprotein flavin reductase family. As to quaternary structure, homodimer. It can form an isobutylamine N-hydroxylase two component enzyme system formed of a flavin reductase component (VlmR) and a monooxygenase component (VlmH).

It carries out the reaction FADH2 + NADP(+) = FAD + NADPH + 2 H(+). It catalyses the reaction FMNH2 + NADP(+) = FMN + NADPH + 2 H(+). Involved in the biosynthesis of the azoxy antibiotic valanimycin, which has an antitumor activity. Catalyzes the reduction of FAD/FMN to FADH(2)/FMNH(2) which are subsequently used for the hydroxylation of isobutylamine by the isobutylamine N-hydroxylase VlmH. It can reduce either FAD or flavin mononucleotide (FMN) but prefers FAD. The enzyme has a strong preference for NADPH as acceptor. The polypeptide is NADPH-flavin oxidoreductase (Streptomyces viridifaciens).